The sequence spans 663 residues: Protein associated with UVRAG as autophagy enhancer (663 aa).

2 disordered regions span residues 1–36 and 65–136; these read MVSQSSGRQDSPVDPWEGVSDDPGNTDGLPSLLDTE and DASP…EERA. Polar residues-rich tracts occupy residues 80-93 and 105-130; these read TASNTKSPLGTSPL and PKGTTDSLGSSSAWGTAGNGSDSSVT. The interval 196 to 235 is interaction with UVRAG; that stretch reads EAFVLPVDAEKENAHFYVADMIISVMEKMKCNILSQQHTE. 4 positions are modified to N6-acetyllysine: Lys-484, Lys-534, Lys-574, and Lys-634.

As to quaternary structure, interacts with UVRAG; the interaction is direct and promotes association with the PI3K/PI3KC3 and HOPS complexes. Interacts with STX17. In terms of processing, acetylated by KAT5/TIP60 under autophagy induction, promoting autophagosome maturation and lipid metabolism. Lys-484 and Lys-574 constitute the key sites for tuning function in autophagy.

It localises to the cytoplasmic vesicle. It is found in the autophagosome membrane. In terms of biological role, regulator of autophagy that promotes autophagosome maturation by facilitating the biogenesis of phosphatidylinositol 3-phosphate (PtdIns(3)P) in late steps of autophagy. Acts by antagonizing RUBCN, thereby stimulating phosphatidylinositol 3-kinase activity of the PI3K/PI3KC3 complex. Following anchorage to the autophagosomal SNARE STX17, promotes the recruitment of PI3K/PI3KC3 and HOPS complexes to the autophagosome to regulate the fusion specificity of autophagosomes with late endosomes/lysosomes. Binds phosphoinositides phosphatidylinositol 3-phosphate (PtdIns(3)P), 4-phosphate (PtdIns(4)P) and 5-phosphate (PtdIns(5)P). In addition to its role in autophagy, acts as a regulator of lipid and glycogen homeostasis. May act as a tumor suppressor. The protein is Protein associated with UVRAG as autophagy enhancer of Bos taurus (Bovine).